The sequence spans 735 residues: Rho GTPase-activating protein SYDE1 (735 aa).

The segment at 1-253 (MAEPLLRKTF…SPTSFRPYEV (253 aa)) is disordered. Over residues 14-31 (RGREKLPRKKSDAKERGH) the composition is skewed to basic and acidic residues. The span at 35-46 (RPEPSPPEPEPQ) shows a compositional bias: pro residues. Positions 47–71 (APEGSQAGAEGPSSPEASRSPARGA) are enriched in low complexity. The segment covering 122-131 (PPAPEPPGPQ) has biased composition (pro residues). Gly residues predominate over residues 211 to 221 (GGPGPAAGPGG). Serine 224, serine 231, serine 235, and serine 244 each carry phosphoserine. Positions 249–366 (RPYEVGPAAR…FRGCQAQQLA (118 aa)) constitute a C2 domain. Residues 398 to 604 (LPLPLLVERE…YLLQSWPDPR (207 aa)) form the Rho-GAP domain. Serine 575 is modified (phosphoserine). Disordered regions lie at residues 608–651 (QSPD…SNRY) and 674–696 (DYDH…PRVT). Phosphoserine is present on residues serine 681 and serine 683.

Post-translationally, palmitoylated. Probably palmitoylated by ZDHHC3 and ZDHHC7. Expressed in trophoblast cells of placental villi.

Functionally, GTPase activator for the Rho-type GTPases. As a GCM1 downstream effector, it is involved in placental development and positively regulates trophoblast cells migration. It regulates cytoskeletal remodeling by controlling the activity of Rho GTPases including RHOA, CDC42 and RAC1. This Homo sapiens (Human) protein is Rho GTPase-activating protein SYDE1 (SYDE1).